The sequence spans 194 residues: Large ribosomal subunit protein bL25 (194 aa).

The protein belongs to the bacterial ribosomal protein bL25 family. CTC subfamily. In terms of assembly, part of the 50S ribosomal subunit; part of the 5S rRNA/L5/L18/L25 subcomplex. Contacts the 5S rRNA. Binds to the 5S rRNA independently of L5 and L18.

This is one of the proteins that binds to the 5S RNA in the ribosome where it forms part of the central protuberance. In Geotalea uraniireducens (strain Rf4) (Geobacter uraniireducens), this protein is Large ribosomal subunit protein bL25.